A 342-amino-acid chain; its full sequence is Non-homologous end-joining protein 1 (342 aa).

Helical transmembrane passes span 27–47 (LLLF…LVSL) and 129–149 (MFYM…NLST). The tract at residues 173 to 342 (LRDLDGGSKV…RKFGKVRIKN (170 aa)) is interaction with LIF1. Residues 270–342 (ADPTNEARPN…RKFGKVRIKN (73 aa)) form a disordered region. Positions 286–296 (PKTDFKPKSRE) are enriched in basic and acidic residues. Positions 297–312 (SSTSSQLRLENFSESE) are enriched in polar residues. The segment covering 331–342 (KKRKFGKVRIKN) has biased composition (basic residues).

This sequence belongs to the XRCC4-XLF family. XLF subfamily. Interacts (via C-terminus) with LIF1 (via N-terminus); the interaction is direct. Interacts with DNL4.

Its subcellular location is the cytoplasm. It is found in the nucleus membrane. Its function is as follows. Involved in non-homologous end joining (NHEJ). Facilitates the transport of LIF1 into the nucleus, where it can interact with DNA ligase DNL4 to repair double-strand breaks (DSB). Mediates mating-type regulation of NHEJ. Prevents chromosome circularisation by NHEJ in absence of telomerase. The chain is Non-homologous end-joining protein 1 (NEJ1) from Saccharomyces cerevisiae (strain ATCC 204508 / S288c) (Baker's yeast).